We begin with the raw amino-acid sequence, 258 residues long: Phosphate import ATP-binding protein PstB (258 aa).

An ABC transporter domain is found at 12 to 253; that stretch reads IQVHNLNFYY…PKMKQTEDYI (242 aa). 44-51 serves as a coordination point for ATP; the sequence is GPSGCGKS.

This sequence belongs to the ABC transporter superfamily. Phosphate importer (TC 3.A.1.7) family. In terms of assembly, the complex is composed of two ATP-binding proteins (PstB), two transmembrane proteins (PstC and PstA) and a solute-binding protein (PstS).

It is found in the cell inner membrane. The enzyme catalyses phosphate(out) + ATP + H2O = ADP + 2 phosphate(in) + H(+). Its function is as follows. Part of the ABC transporter complex PstSACB involved in phosphate import. Responsible for energy coupling to the transport system. In Photorhabdus laumondii subsp. laumondii (strain DSM 15139 / CIP 105565 / TT01) (Photorhabdus luminescens subsp. laumondii), this protein is Phosphate import ATP-binding protein PstB.